The sequence spans 325 residues: Anthranilate phosphoribosyltransferase (325 aa).

5-phospho-alpha-D-ribose 1-diphosphate is bound by residues Gly74, 77–78, Thr82, 84–87, 101–109, and Ser113; these read GD, NVST, and KHGNVSITS. Gly74 lines the anthranilate pocket. Ser86 lines the Mg(2+) pocket. Position 104 (Asn104) interacts with anthranilate. Arg159 contacts anthranilate. Positions 217 and 218 each coordinate Mg(2+).

This sequence belongs to the anthranilate phosphoribosyltransferase family. In terms of assembly, homodimer. It depends on Mg(2+) as a cofactor.

It catalyses the reaction N-(5-phospho-beta-D-ribosyl)anthranilate + diphosphate = 5-phospho-alpha-D-ribose 1-diphosphate + anthranilate. It participates in amino-acid biosynthesis; L-tryptophan biosynthesis; L-tryptophan from chorismate: step 2/5. In terms of biological role, catalyzes the transfer of the phosphoribosyl group of 5-phosphorylribose-1-pyrophosphate (PRPP) to anthranilate to yield N-(5'-phosphoribosyl)-anthranilate (PRA). This chain is Anthranilate phosphoribosyltransferase, found in Thermococcus kodakarensis (strain ATCC BAA-918 / JCM 12380 / KOD1) (Pyrococcus kodakaraensis (strain KOD1)).